The sequence spans 311 residues: Methionyl-tRNA formyltransferase (311 aa).

A (6S)-5,6,7,8-tetrahydrofolate-binding site is contributed by 110-113 (SLLP).

This sequence belongs to the Fmt family.

The catalysed reaction is L-methionyl-tRNA(fMet) + (6R)-10-formyltetrahydrofolate = N-formyl-L-methionyl-tRNA(fMet) + (6S)-5,6,7,8-tetrahydrofolate + H(+). Functionally, attaches a formyl group to the free amino group of methionyl-tRNA(fMet). The formyl group appears to play a dual role in the initiator identity of N-formylmethionyl-tRNA by promoting its recognition by IF2 and preventing the misappropriation of this tRNA by the elongation apparatus. In Streptococcus pyogenes serotype M2 (strain MGAS10270), this protein is Methionyl-tRNA formyltransferase.